We begin with the raw amino-acid sequence, 95 residues long: Secretoglobin family 1C member 1 (95 aa).

Residues 1–23 (MKGSSALLLVALSLLCVCGLTRA) form the signal peptide.

The protein belongs to the secretoglobin family.

The protein resides in the secreted. This Mus musculus (Mouse) protein is Secretoglobin family 1C member 1 (Scgb1c1).